Here is a 301-residue protein sequence, read N- to C-terminus: MSNGSVPVSGIGGRGDGEGSSQVHMESTGGMDRAKVFAVYGKGGIGKSTTSSNLAVAFSQLGKRVLQIGCDPKHDSTFTLTKRLVPTVIDSLEEVDFHMEELRPEDYVYEGYNGVLCVEAGGPPAGTGCGGYVVGQTVKLLKQHHLLEETDVVIFDVLGDVVCGGFAAPLQHADQALIVTANDFDSIFAMNRIAGAIQAKAKNYKVRLGGVIANRSERTDQIDRINERIGLRTLAHVPNYDVVRRSRLHKSTLFELEEQSEELERVRDEYLSLAAALWNGVDPLSPSPLKDREVFDLLGFD.

The segment at 1–26 (MSNGSVPVSGIGGRGDGEGSSQVHME) is disordered. Residues 44-49 (GIGKST) and Lys73 each bind ATP. Position 48 (Ser48) interacts with Mg(2+). 2 residues coordinate [4Fe-4S] cluster: Cys129 and Cys163. 214–215 (NR) contributes to the ATP binding site.

This sequence belongs to the NifH/BchL/ChlL family. Homodimer. Protochlorophyllide reductase is composed of three subunits; BchL, BchN and BchB. Requires [4Fe-4S] cluster as cofactor.

It catalyses the reaction chlorophyllide a + oxidized 2[4Fe-4S]-[ferredoxin] + 2 ADP + 2 phosphate = protochlorophyllide a + reduced 2[4Fe-4S]-[ferredoxin] + 2 ATP + 2 H2O. Its pathway is porphyrin-containing compound metabolism; bacteriochlorophyll biosynthesis (light-independent). Component of the dark-operative protochlorophyllide reductase (DPOR) that uses Mg-ATP and reduced ferredoxin to reduce ring D of protochlorophyllide (Pchlide) to form chlorophyllide a (Chlide). This reaction is light-independent. The L component serves as a unique electron donor to the NB-component of the complex, and binds Mg-ATP. The chain is Light-independent protochlorophyllide reductase iron-sulfur ATP-binding protein from Halorhodospira halophila (strain DSM 244 / SL1) (Ectothiorhodospira halophila (strain DSM 244 / SL1)).